Reading from the N-terminus, the 363-residue chain is Ribosomal RNA large subunit methyltransferase M (363 aa).

S-adenosyl-L-methionine is bound by residues S190, 223–226 (CPGG), D242, D262, and D279. Catalysis depends on K308, which acts as the Proton acceptor.

It belongs to the class I-like SAM-binding methyltransferase superfamily. RNA methyltransferase RlmE family. RlmM subfamily. Monomer.

It localises to the cytoplasm. It catalyses the reaction cytidine(2498) in 23S rRNA + S-adenosyl-L-methionine = 2'-O-methylcytidine(2498) in 23S rRNA + S-adenosyl-L-homocysteine + H(+). Catalyzes the 2'-O-methylation at nucleotide C2498 in 23S rRNA. The sequence is that of Ribosomal RNA large subunit methyltransferase M from Aliivibrio salmonicida (strain LFI1238) (Vibrio salmonicida (strain LFI1238)).